The primary structure comprises 1256 residues: MSGVNVADLLATTMTLPITAAAGAATSQAAATSATNASHLQPATLTGHISTTAAAKTTTTPTSSLPITSQFVDASLTSLSLTATSSDASYSSPFSSYLSSDSTFELLSTVGPNITANGSDIAVDNQAELEESWLDLSLLLLKGFIFSSIILAAVLGNALVIISVQRNRKLRVITNYFVVSLAMADMLVALCAMTFNASVELSGGKWMFGPFMCNVYNSLDVYFSTASILHLCCISVDRYYAIVRPLEYPLNMTHKTVCFMLANVWILPALISFTPIFLGWYTTEEHLREISLHPDQCSFVVNKAYALISSSVSFWIPGIVMLVMYWRIFKEAIRQRKALSRTSSNILLNSVHMGHTQQPTSLSYLHPSDCDLNATSAREETHSALSNLEDMLQPATDEDDDRDECDELRVPSPPPRRLSRSSIDLRDLEQERYEKVTHTDSAPSMMALQQQQPSHNQLQPPAPVFNPQIWTEGKMIPSKELDKEHSHPNGPQQQLSLTSGSGNSEPEPESTAYRVFGGLNSDESEGNDLYDTHLPLAEDNKELKRLIEDNYLYFKRQTGGTIISGPGGGKYAALSETDFIRLKAGAAACGRKAFASSDSEFLRTISESRALPEQPVPGKEKGFNILSLLSKTKRSSTECFTLEKKRHQANSEGSSFFRRSRNRKLSHSYNGCGGGKERKLERRQRQHSDTDSTPNKPDILLDINVLSEQSGASVIQQFSDGVQLIDFSELKTPPERIRSDDELAQLADCFGESPQQPATPPPSLSPPELPEPSGLLIASSSELAEIFRSLSFPLGRPAGAPQRLSTLSDQVCANYLMSPPNTPAPPAISVPNGGAMDSSASSNAQSASINVYFLSPPPHAAAPGYTPSDTSTVSLDVVTSLPMPVPVPQPNPQMASQSNISPKPEIILDSTLSPVEGCGDEHRDVTSPLFKRKDSAGDADVSVSGNGGAGGVGGVGGRQGRCSILAGYDGIQTVRKRQASVVTYDVNVINFSQENSDSRSYIPMGRVSTSSAKHEFSNKSSLIRRGGICIFVDEEEAEIIEQRPRGITFAAVPSPLPKCPLCGADISSTTGTTANATATANADSTIDTTVTTSSKRSIHEQTPDLGQRPASSSSSTRFWHKRTAAVTACWQQSKNRKRRFKTGCSHCGATGGSVRPAKGWKAEHKAARTLGIIMGVFLLCWLPFFLWYVITSLCGPACPCPDVLVVVLFWIGYFNSTLNPLIYAYFNRDFREAFRNTLECVLPCLEKRNPYNAYYV.

Over 1–143 the chain is Extracellular; sequence MSGVNVADLL…LDLSLLLLKG (143 aa). N-linked (GlcNAc...) asparagine glycosylation is found at Asn-36, Asn-113, and Asn-117. A helical membrane pass occupies residues 144 to 164; the sequence is FIFSSIILAAVLGNALVIISV. Over 165-171 the chain is Cytoplasmic; sequence QRNRKLR. Residues 172–192 traverse the membrane as a helical segment; that stretch reads VITNYFVVSLAMADMLVALCA. Over 193–213 the chain is Extracellular; sequence MTFNASVELSGGKWMFGPFMC. The N-linked (GlcNAc...) asparagine glycan is linked to Asn-196. The helical transmembrane segment at 214-236 threads the bilayer; the sequence is NVYNSLDVYFSTASILHLCCISV. Over 237 to 258 the chain is Cytoplasmic; it reads DRYYAIVRPLEYPLNMTHKTVC. The chain crosses the membrane as a helical span at residues 259 to 279; that stretch reads FMLANVWILPALISFTPIFLG. Over 280–305 the chain is Extracellular; it reads WYTTEEHLREISLHPDQCSFVVNKAY. Residues 306–326 traverse the membrane as a helical segment; sequence ALISSSVSFWIPGIVMLVMYW. Residues 327–1169 are Cytoplasmic-facing; it reads RIFKEAIRQR…WKAEHKAART (843 aa). Disordered stretches follow at residues 377 to 427, 480 to 512, 665 to 698, 751 to 774, and 1087 to 1117; these read AREE…DLRD, ELDK…ESTA, LSHS…NKPD, GESP…EPSG, and DTTV…SSTR. Positions 396–406 are enriched in acidic residues; it reads TDEDDDRDECD. The span at 489–498 shows a compositional bias: polar residues; the sequence is NGPQQQLSLT. Residues 757-770 show a composition bias toward pro residues; it reads PATPPPSLSPPELP. Residues 1170 to 1190 form a helical membrane-spanning segment; the sequence is LGIIMGVFLLCWLPFFLWYVI. Residues 1191–1202 lie on the Extracellular side of the membrane; that stretch reads TSLCGPACPCPD. A helical transmembrane segment spans residues 1203 to 1223; it reads VLVVVLFWIGYFNSTLNPLIY. The Cytoplasmic portion of the chain corresponds to 1224–1256; the sequence is AYFNRDFREAFRNTLECVLPCLEKRNPYNAYYV.

Belongs to the G-protein coupled receptor 1 family. In terms of tissue distribution, in the adult, expressed in the inferior and superior protocerebrum, the posterior lateral protocerebrum, the deutocerebrum, the surface of the subesophageal ganglion, the lateral cell body region, the cortical layer of the ventral nerve cord and the optic lobe medulla of the central nervous system (CNS). Also expressed in the nurse cells and follicle cells of the egg chambers in the ovary at oogenic stages 1-10, and spermatogonia and spermatocytes in the testis. Expressed ubiquitously in the embryonic CNS. In larvae, expressed in the ventral cortical layer of the ventral nerve cord, the cortical layer of the brain lobes, salivary glands, midgut, imaginal disks and developing reproductive organs. Expressed in the larval prothoracic gland with weak expression in other regions of the ring gland.

It localises to the cell membrane. Its function is as follows. Autoreceptor for octopamine, which is a neurotransmitter, neurohormone, and neuromodulator in invertebrates. Probably also acts as a receptor for tyramine during ecdysone biosynthesis. Required for the biosynthesis of the steroid hormone ecdysone which is necessary for metamorphosis. Involved in activation of prothoracicotropic hormone and insulin-like peptide signaling which is required for the expression of ecdysone biosynthetic genes. In Drosophila melanogaster (Fruit fly), this protein is Octopamine receptor beta-3R.